The following is a 361-amino-acid chain: Outer mitochondrial transmembrane helix translocase (361 aa).

Residues 1-15 (MVHAETFSRPLSRNE) lie on the Mitochondrial intermembrane side of the membrane. Residues 16-32 (VVGLIFRLTIFGAVTYF) form a helical membrane-spanning segment. Residues 33 to 361 (TIKWMVDAID…QNVLTHVCLD (329 aa)) are Cytoplasmic-facing. 133–140 (GPPGCGKT) is a binding site for ATP. Ser322 is subject to Phosphoserine.

The protein belongs to the AAA ATPase family. MSP1 subfamily. As to quaternary structure, interacts with GRIA2 and GRIP1 in an ATP-dependent manner. ATAD1-catalyzed ATP hydrolysis disrupts not only its binding to GRIA2 and GRIP1, but also interaction between GRIP1 and GRIA2, leading to AMPAR complex disassembly.

The protein localises to the mitochondrion outer membrane. It is found in the peroxisome membrane. The protein resides in the postsynaptic cell membrane. The enzyme catalyses [protein]-with a C-terminal TM segment(out) + ATP + H2O = [protein]-with a C-terminal TM segment(in) + ADP + phosphate + H(+). Its function is as follows. Outer mitochondrial translocase required to remove mislocalized tail-anchored transmembrane proteins on mitochondria. Specifically recognizes and binds tail-anchored transmembrane proteins: acts as a dislocase that mediates the ATP-dependent extraction of mistargeted tail-anchored transmembrane proteins from the mitochondrion outer membrane. Also plays a critical role in regulating the surface expression of AMPA receptors (AMPAR), thereby regulating synaptic plasticity and learning and memory. Required for NMDA-stimulated AMPAR internalization and inhibition of GRIA1 and GRIA2 recycling back to the plasma membrane; these activities are ATPase-dependent. The polypeptide is Outer mitochondrial transmembrane helix translocase (Bos taurus (Bovine)).